We begin with the raw amino-acid sequence, 748 residues long: Transcription factor hmgR (748 aa).

The zn(2)-C6 fungal-type DNA-binding region spans Cys-24–Cys-59. Disordered stretches follow at residues Ser-108 to Leu-142 and Arg-661 to Ala-683.

It is found in the nucleus. Its function is as follows. Transcription factor; part of the L-tyrosine degradation gene cluster that mediates the biosynthesis of the brownish pigment pyomelanin as an alternative melanin. Acts as a transcriptional activator for the genes of the tyrosine degradation cluster. This is Transcription factor hmgR from Aspergillus fumigatus (strain ATCC MYA-4609 / CBS 101355 / FGSC A1100 / Af293) (Neosartorya fumigata).